The chain runs to 239 residues: MKPHLHQISQIKLWAIIPAAGSGSRFSKTALKQYQTIENKTVLEHTVERLNGLTLEGYVLAINEHDHVAQNLPLTQKHKAHFCKGGLERVDSVLNALQYLSSIASDEDYVLVHDAARPCVSLSCLQALAEYAIKYTTNAILAIPVRDTLKQVVDRSHISKTIDRNHLWQAQTPQIAKIGVLKHAIQLALENNIKITDEASALEYAGAVVDVVQGRSDNIKITYQDDLELARLILLSQKS.

It belongs to the IspD/TarI cytidylyltransferase family. IspD subfamily.

It catalyses the reaction 2-C-methyl-D-erythritol 4-phosphate + CTP + H(+) = 4-CDP-2-C-methyl-D-erythritol + diphosphate. The protein operates within isoprenoid biosynthesis; isopentenyl diphosphate biosynthesis via DXP pathway; isopentenyl diphosphate from 1-deoxy-D-xylulose 5-phosphate: step 2/6. In terms of biological role, catalyzes the formation of 4-diphosphocytidyl-2-C-methyl-D-erythritol from CTP and 2-C-methyl-D-erythritol 4-phosphate (MEP). This is 2-C-methyl-D-erythritol 4-phosphate cytidylyltransferase from Acinetobacter baylyi (strain ATCC 33305 / BD413 / ADP1).